A 744-amino-acid polypeptide reads, in one-letter code: MAVQPGPPQLLQVLLTISLGSIRLIQAGAYYGIKPLPPQIPPQMPPQIPQYQPLGQQVPHMPLAKDGLTMGKEMPHAQYGKEYPHLPQYMKEVQPVPRMGKEAVPKKGKEIPLASLRGEQGPRGEPGPRGPPGPPGLPGQGIPGIKGKPGPQGYPGVGKPGMPGMPGKPGAMGMPGAKGEIGPKGEIGPMGIPGPQGPPGPHGLPGIGKPGGPGLPGQPGAKGDRGPKGPPGPPGLQGPKGEKGFGMPGLPGLKGPPGMHGPPGPVGLPGVGKPGVTGFPGPQGPLGKPGPPGEPGPQGPIGVPGVQGPPGLPGVGKPGQDGIPGQPGFPGGKGEQGLPGLPGPPGLPGVGKPGFPGPKGDRGIGGVPGALGPRGEKGPVGAPGMGGPPGEPGLPGIPGPMGPPGAIGFPGPKGEGGIVGPQGPPGPKGEPGLQGFPGKPGFLGEVGPPGIRGLPGPIGPKGEAGHKGLPGLPGVPGLLGPKGEPGIPGDQGLQGPPGIPGITGPSGPIGPPGIPGPKGEPGLPGPPGFPGVGKPGVAGLHGPPGKPGALGPQGQPGLPGPPGPPGPPGPPAVMPPTPAPQGEYLPDMGLGIDGVKTPHAYAAKKGKNGGPAYEMPAFTAELTAPFPPVGAPIKFDRLLYNGRQNYNPQTGIFTCEVPGVYYFAYHVHCKGGNVWVALFKNNEPVMYTYDEYKKGFLDQASGSAVLLLRPGDRVFLQNPSEQAAGLYAGQYVHSSFSGYLLYPM.

A signal peptide spans 1 to 27 (MAVQPGPPQLLQVLLTISLGSIRLIQA). A nonhelical region (NC2) region spans residues 29–117 (AYYGIKPLPP…GKEIPLASLR (89 aa)). A compositionally biased stretch (basic and acidic residues) spans 101–110 (KEAVPKKGKE). Disordered stretches follow at residues 101–434 (KEAV…PGLQ) and 463–584 (EAGH…QGEY). Residues 118–571 (GEQGPRGEPG…PGPPGPPGPP (454 aa)) form a triple-helical region region. A compositionally biased stretch (pro residues) spans 128 to 137 (PRGPPGPPGL). Residues 168–190 (KPGAMGMPGAKGEIGPKGEIGPM) are compositionally biased toward low complexity. Residues 203–217 (GLPGIGKPGGPGLPG) show a composition bias toward gly residues. A compositionally biased stretch (pro residues) spans 288–298 (KPGPPGEPGPQ). Residues 328 to 337 (GFPGGKGEQG) show a composition bias toward gly residues. Over residues 389–403 (PGEPGLPGIPGPMGP) the composition is skewed to pro residues. Gly residues predominate over residues 411-420 (GPKGEGGIVG). 2 stretches are compositionally biased toward low complexity: residues 469 to 506 (LPGL…TGPS) and 540 to 556 (LHGP…QGQP). A compositionally biased stretch (pro residues) spans 558–579 (LPGPPGPPGPPGPPAVMPPTPA). A nonhelical region (NC1) region spans residues 572 to 744 (AVMPPTPAPQ…SFSGYLLYPM (173 aa)). A C1q domain is found at 611 to 744 (PAYEMPAFTA…SFSGYLLYPM (134 aa)).

As to quaternary structure, homotrimers, or heterotrimers in association with alpha 2(VIII) type collagens. Four homotrimers can form a tetrahedron stabilized by central interacting C-terminal NC1 trimers. Prolines at the third position of the tripeptide repeating unit (G-X-Y) are hydroxylated in some or all of the chains.

The protein resides in the secreted. It localises to the extracellular space. It is found in the extracellular matrix. Its subcellular location is the basement membrane. In terms of biological role, macromolecular component of the subendothelium. Major component of the Descemet's membrane (basement membrane) of corneal endothelial cells. Also a component of the endothelia of blood vessels. Necessary for migration and proliferation of vascular smooth muscle cells and thus, has a potential role in the maintenance of vessel wall integrity and structure, in particular in atherogenesis. This is Collagen alpha-1(VIII) chain (COL8A1) from Gallus gallus (Chicken).